The following is a 131-amino-acid chain: Small ribosomal subunit protein uS11 (131 aa).

This sequence belongs to the universal ribosomal protein uS11 family. In terms of assembly, part of the 30S ribosomal subunit. Interacts with proteins S7 and S18. Binds to IF-3.

Located on the platform of the 30S subunit, it bridges several disparate RNA helices of the 16S rRNA. Forms part of the Shine-Dalgarno cleft in the 70S ribosome. The chain is Small ribosomal subunit protein uS11 from Syntrophotalea carbinolica (strain DSM 2380 / NBRC 103641 / GraBd1) (Pelobacter carbinolicus).